Here is a 70-residue protein sequence, read N- to C-terminus: Small ribosomal subunit protein bS21A (70 aa).

Belongs to the bacterial ribosomal protein bS21 family.

This Paraburkholderia xenovorans (strain LB400) protein is Small ribosomal subunit protein bS21A.